The sequence spans 406 residues: Probable G-protein coupled receptor tkr-1 (406 aa).

At Met1 to Ala47 the chain is on the extracellular side. A helical membrane pass occupies residues Ile48–Ile68. Residues Tyr69–Tyr76 are Cytoplasmic-facing. Residues Gly77–Val97 traverse the membrane as a helical segment. Residues Gly98–Cys115 lie on the Extracellular side of the membrane. The chain crosses the membrane as a helical span at residues Thr116–Leu136. At Ser137–Ser158 the chain is on the cytoplasmic side. A helical transmembrane segment spans residues Val159–Ala179. At Ala180–Pro204 the chain is on the extracellular side. A helical membrane pass occupies residues Val205 to Leu225. Residues Gly226–Met261 lie on the Cytoplasmic side of the membrane. Residues Leu262–Phe282 form a helical membrane-spanning segment. The Extracellular segment spans residues Ala283–Tyr297. A helical transmembrane segment spans residues Leu298 to Ala318. Topologically, residues Asn319–Arg406 are cytoplasmic.

It belongs to the G-protein coupled receptor 1 family.

The protein resides in the cell membrane. In terms of biological role, not known. Putative receptor. In Caenorhabditis elegans, this protein is Probable G-protein coupled receptor tkr-1 (tkr-1).